Reading from the N-terminus, the 139-residue chain is Phosphoribosyl-AMP cyclohydrolase (139 aa).

Mg(2+) is bound at residue Asp-92. Residue Cys-93 participates in Zn(2+) binding. Mg(2+) is bound by residues Asp-94 and Asp-96. Positions 111 and 118 each coordinate Zn(2+).

The protein belongs to the PRA-CH family. In terms of assembly, homodimer. Requires Mg(2+) as cofactor. Zn(2+) is required as a cofactor.

Its subcellular location is the cytoplasm. It carries out the reaction 1-(5-phospho-beta-D-ribosyl)-5'-AMP + H2O = 1-(5-phospho-beta-D-ribosyl)-5-[(5-phospho-beta-D-ribosylamino)methylideneamino]imidazole-4-carboxamide. The protein operates within amino-acid biosynthesis; L-histidine biosynthesis; L-histidine from 5-phospho-alpha-D-ribose 1-diphosphate: step 3/9. Functionally, catalyzes the hydrolysis of the adenine ring of phosphoribosyl-AMP. In Caulobacter vibrioides (strain ATCC 19089 / CIP 103742 / CB 15) (Caulobacter crescentus), this protein is Phosphoribosyl-AMP cyclohydrolase.